We begin with the raw amino-acid sequence, 233 residues long: UPF0502 protein Sden_2282 (233 aa).

Polar residues predominate over residues 178 to 198; the sequence is TQHQRPPQTPHLSSRTNVDNS. Residues 178 to 204 are disordered; sequence TQHQRPPQTPHLSSRTNVDNSYESDER.

It belongs to the UPF0502 family.

This chain is UPF0502 protein Sden_2282, found in Shewanella denitrificans (strain OS217 / ATCC BAA-1090 / DSM 15013).